The following is a 303-amino-acid chain: Glycine--tRNA ligase alpha subunit (303 aa).

The protein belongs to the class-II aminoacyl-tRNA synthetase family. Tetramer of two alpha and two beta subunits.

The protein resides in the cytoplasm. The enzyme catalyses tRNA(Gly) + glycine + ATP = glycyl-tRNA(Gly) + AMP + diphosphate. The protein is Glycine--tRNA ligase alpha subunit of Klebsiella pneumoniae subsp. pneumoniae (strain ATCC 700721 / MGH 78578).